A 354-amino-acid chain; its full sequence is Erythroferrone (354 aa).

Residues 1–28 (MAPARRPAGARLLLVYAGLLAAAAAGLG) form the signal peptide. Composition is skewed to low complexity over residues 26–37 (GLGSPEPGAPSR) and 51–62 (PRGPGESRAGPA). Residues 26 to 123 (GLGSPEPGAP…PGPPGPQGPP (98 aa)) form a disordered region. Over residues 69 to 80 (TAERAHSVDPRD) the composition is skewed to basic and acidic residues. Residues 94-107 (NGKKRSRGKAKKLK) are compositionally biased toward basic residues. Residues P111, P113, P114, P116, P117, and P119 each carry the hydroxyproline modification. The segment covering 111–123 (PGPPGPPGPQGPP) has biased composition (pro residues). A C1q domain is found at 199–354 (APRVEAAFLC…SHFSAVLLGV (156 aa)). N-linked (GlcNAc...) asparagine glycans are attached at residues N243, N295, and N333.

Belongs to the adipolin/erythroferrone family. In terms of assembly, homodimer; disulfide-linked. Forms trimer, hexamers and higher molecular weight oligomers. May form heteromeric complexes with C1QTNF2 and C1QTNF12 and, to a lesser extent, with C1QTNF5 and C1QTNF10. Interacts with BMP5 and BMP7; the interaction inhibits BMP-induced transcription of HAMP. Interacts with BMP6; the interaction inhibits BMP-induced transcription of HAMP. Interacts with BMP2. Interacts with heterodimers composed of BMP2 and BMP6 in vitro, the interaction inhibits the heterodimer binding to its receptor BMPR1A /ALK3 and thereby suppresses expression of HAMP. In terms of processing, N-glycosylated; required for secretion of the mature protein.

It localises to the secreted. Functionally, iron-regulatory hormone that acts as an erythroid regulator after hemorrhage: produced by erythroblasts following blood loss and mediates suppression of hepcidin (HAMP) expression in the liver, thereby promoting increased iron absorption and mobilization from stores. Promotes lipid uptake into adipocytes and hepatocytes via transcriptional up-regulation of genes involved in fatty acid uptake. Inhibits apoptosis and inflammatory response in cardiomyocytes via promotion of sphingosine-1-phosphate (S1P) and cAMP-dependent activation of AKT signaling. Inhibits autophagy induced by nutrient deficiency in hepatocytes via promoting the phosphorylation of IRS1, AKT, and MTOR, and thereby subsequent activation of the AKT-MTOR signaling pathway. Negatively regulates the differentiation of osteoblasts, potentially via sequestering BMP2, and thereby inhibits the activation of SMAD signaling. The reduction in BMP2 signaling in osteoblasts also results in an increase in expression of the osteoclastogenesis-promoting factors TNFSF11/RANKL and SOST, thereby indirectly promotes bone resorption. This chain is Erythroferrone, found in Homo sapiens (Human).